The following is a 41-amino-acid chain: Large ribosomal subunit protein bL36 (41 aa).

This sequence belongs to the bacterial ribosomal protein bL36 family.

In Vibrio vulnificus (strain YJ016), this protein is Large ribosomal subunit protein bL36.